Reading from the N-terminus, the 305-residue chain is UDP-N-acetylenolpyruvoylglucosamine reductase 2 (305 aa).

One can recognise an FAD-binding PCMH-type domain in the interval 33–197 (VGGKADVFVA…LEARFELEEG (165 aa)). R176 is a catalytic residue. S226 acts as the Proton donor in catalysis. The active site involves E296.

Belongs to the MurB family. Requires FAD as cofactor.

The protein resides in the cytoplasm. The enzyme catalyses UDP-N-acetyl-alpha-D-muramate + NADP(+) = UDP-N-acetyl-3-O-(1-carboxyvinyl)-alpha-D-glucosamine + NADPH + H(+). Its pathway is cell wall biogenesis; peptidoglycan biosynthesis. Its function is as follows. Cell wall formation. This Bacillus anthracis protein is UDP-N-acetylenolpyruvoylglucosamine reductase 2 (murB2).